A 192-amino-acid polypeptide reads, in one-letter code: MSIQNEMPGYNEMNRFLNQQGAGLTPAEMHGLISGMICGGNNDSSWQPLLHDLTNEGLAFGHELAQALRKMHAATSDALEDDGFLFQLYLPEGDDVSVFDRADALAGWVNHFLLGLGVTQPKLDKVTGETGEAIDDLRNIAQLGYDESEDQEELEMSLEEIIEYVRVAALLCHDTFTRQQPTAPEVRKPTLH.

Belongs to the UPF0149 family.

The chain is UPF0149 protein YgfB from Salmonella agona (strain SL483).